The sequence spans 590 residues: Muscarinic acetylcholine receptor M3 (590 aa).

At 1-67 (MTLHNNNTTS…DPLGGHTIWQ (67 aa)) the chain is on the extracellular side. 6 N-linked (GlcNAc...) asparagine glycosylation sites follow: asparagine 6, asparagine 7, asparagine 15, asparagine 41, asparagine 48, and asparagine 53. Residues 68-91 (VVFIAFLTGILALVTIIGNILVIV) form a helical membrane-spanning segment. Topologically, residues 92–104 (AFKVNKQLKTVNN) are cytoplasmic. The chain crosses the membrane as a helical span at residues 105–130 (YFLLSLACADLIIGVISMNLFTTYII). The Extracellular segment spans residues 131 to 142 (MNRWALGNLACD). A disulfide bridge connects residues cysteine 141 and cysteine 221. A helical membrane pass occupies residues 143–164 (LWLSIDYVASNASVMNLLVISF). At 165 to 184 (DRYFSITRPLTYRAKRTTKR) the chain is on the cytoplasmic side. Residues 185–206 (AGVMIGLAWVISFILWAPAILF) form a helical membrane-spanning segment. At 207–229 (WQYFVGKRTVPPGECFIQFLSEP) the chain is on the extracellular side. A helical transmembrane segment spans residues 230–252 (TITFGTAIAAFYMPVTIMTILYW). Residues 253 to 491 (RIYKETEKRT…SLIKEKKAAQ (239 aa)) are Cytoplasmic-facing. The short motif at 275 to 281 (AEAENFV) is the Basolateral sorting signal element. The interval 324–357 (AEQMDQDHSSSDSWNNNDAAASLENSASSDEEDI) is disordered. Positions 334–345 (SDSWNNNDAAAS) are enriched in low complexity. The residue at position 385 (serine 385) is a Phosphoserine. The chain crosses the membrane as a helical span at residues 492–514 (TLSAILLAFIITWTPYNIMVLVN). Residues 515 to 526 (TFCDSCIPKTYW) are Extracellular-facing. Cysteine 517 and cysteine 520 are disulfide-bonded. The helical transmembrane segment at 527–546 (NLGYWLCYINSTVNPVCYAL) threads the bilayer. Residues 547–590 (CNKTFRTTFKMLLLCQCDKRKRRKQQYQQRQSVIFHKRVPEQAL) lie on the Cytoplasmic side of the membrane.

It belongs to the G-protein coupled receptor 1 family. Muscarinic acetylcholine receptor subfamily. CHRM3 sub-subfamily. In terms of assembly, homodimer; the dimers can form tetramers. Interacts with NALCN. Interacts with TMEM147.

The protein localises to the cell membrane. Its subcellular location is the postsynaptic cell membrane. It is found in the basolateral cell membrane. The protein resides in the endoplasmic reticulum membrane. The muscarinic acetylcholine receptor mediates various cellular responses, including inhibition of adenylate cyclase, breakdown of phosphoinositides and modulation of potassium channels through the action of G proteins. Primary transducing effect is Pi turnover. This chain is Muscarinic acetylcholine receptor M3 (CHRM3), found in Sus scrofa (Pig).